Consider the following 302-residue polypeptide: MIKQRTLKNIIRATGVGLHSGEKVYLTLKPAPVDTGVVFCRTDLDPIVEIPARAENVGETLLSTTLVKSGVKIATVEHLLSALAGLGIDNCYVELSAAEVPIMDGSAGPFVFLIQSAGIAEQDAPKKFIRIKREVTVTDEDKRATFVPFDGFKVTFSIDFDHPVIKGRSQETVIDFSSTSFVKEVSRARTFGFMRDIEKLRAMNLALGGSMDNVIVVDDFKILNEDGLRYEDEFVKHKVLDAIGDLYLLGNSLIGEFKGHKSGHGLNNKLLRELLSQKDAWEVVTFEDAGEAPISYLKPVLA.

His78, His237, and Asp241 together coordinate Zn(2+). His264 functions as the Proton donor in the catalytic mechanism.

Belongs to the LpxC family. It depends on Zn(2+) as a cofactor.

The catalysed reaction is a UDP-3-O-[(3R)-3-hydroxyacyl]-N-acetyl-alpha-D-glucosamine + H2O = a UDP-3-O-[(3R)-3-hydroxyacyl]-alpha-D-glucosamine + acetate. Its pathway is glycolipid biosynthesis; lipid IV(A) biosynthesis; lipid IV(A) from (3R)-3-hydroxytetradecanoyl-[acyl-carrier-protein] and UDP-N-acetyl-alpha-D-glucosamine: step 2/6. In terms of biological role, catalyzes the hydrolysis of UDP-3-O-myristoyl-N-acetylglucosamine to form UDP-3-O-myristoylglucosamine and acetate, the committed step in lipid A biosynthesis. The protein is UDP-3-O-acyl-N-acetylglucosamine deacetylase of Hahella chejuensis (strain KCTC 2396).